Here is a 533-residue protein sequence, read N- to C-terminus: WUSCHEL-related homeobox 7 (533 aa).

Disordered stretches follow at residues 1-74 (MASS…NPRP) and 125-212 (SKNK…STQA). Low complexity predominate over residues 28–41 (AGSPPSLLSGSSAG). The segment covering 59–68 (GEERVPDPKP) has biased composition (basic and acidic residues). Positions 65 to 129 (DPKPRWNPRP…NRKSRSKNKL (65 aa)) form a DNA-binding region, homeobox; WUS-type. Positions 132–143 (GGTGRAGLGLGG) are enriched in gly residues. The segment covering 161–174 (FTPPPPILPAPQPV) has biased composition (pro residues). Residues 175–202 (QPQQQLVSPVAAPTSSSSSSSDRSSGSS) show a composition bias toward low complexity.

The protein belongs to the WUS homeobox family.

It is found in the nucleus. Functionally, transcription factor which may be involved in developmental processes. This Oryza sativa subsp. japonica (Rice) protein is WUSCHEL-related homeobox 7 (WOX7).